The sequence spans 263 residues: Type III pantothenate kinase (263 aa).

9-16 (DIGNTNVK) contacts ATP. Residues Tyr-103 and 110 to 113 (GADR) each bind substrate. Asp-112 serves as the catalytic Proton acceptor. Asp-134 serves as a coordination point for K(+). Thr-137 contacts ATP. A substrate-binding site is contributed by Thr-190.

The protein belongs to the type III pantothenate kinase family. In terms of assembly, homodimer. It depends on NH4(+) as a cofactor. K(+) is required as a cofactor.

The protein localises to the cytoplasm. It catalyses the reaction (R)-pantothenate + ATP = (R)-4'-phosphopantothenate + ADP + H(+). It functions in the pathway cofactor biosynthesis; coenzyme A biosynthesis; CoA from (R)-pantothenate: step 1/5. Functionally, catalyzes the phosphorylation of pantothenate (Pan), the first step in CoA biosynthesis. The chain is Type III pantothenate kinase from Oleidesulfovibrio alaskensis (strain ATCC BAA-1058 / DSM 17464 / G20) (Desulfovibrio alaskensis).